A 420-amino-acid chain; its full sequence is Tyrosine--tRNA ligase 2 (420 aa).

Tyrosine 34 contributes to the L-tyrosine binding site. Residues proline 39–histidine 48 carry the 'HIGH' region motif. Positions 168 and 172 each coordinate L-tyrosine. Residues lysine 230–serine 234 carry the 'KMSKS' region motif. Position 233 (lysine 233) interacts with ATP. In terms of domain architecture, S4 RNA-binding spans lysine 352–leucine 418.

Belongs to the class-I aminoacyl-tRNA synthetase family. TyrS type 1 subfamily. As to quaternary structure, homodimer.

The protein localises to the cytoplasm. The catalysed reaction is tRNA(Tyr) + L-tyrosine + ATP = L-tyrosyl-tRNA(Tyr) + AMP + diphosphate + H(+). Functionally, catalyzes the attachment of tyrosine to tRNA(Tyr) in a two-step reaction: tyrosine is first activated by ATP to form Tyr-AMP and then transferred to the acceptor end of tRNA(Tyr). The protein is Tyrosine--tRNA ligase 2 of Bacillus cereus (strain ATCC 14579 / DSM 31 / CCUG 7414 / JCM 2152 / NBRC 15305 / NCIMB 9373 / NCTC 2599 / NRRL B-3711).